Here is a 451-residue protein sequence, read N- to C-terminus: Tubulin beta chain (451 aa).

8 residues coordinate GTP: Q11, E69, S138, G142, T143, G144, N204, and N226. Residue E69 participates in Mg(2+) binding. The interval 426–451 (QDATAEEEGEFDENEGAEGEEQPADY) is disordered. Residues 429–451 (TAEEEGEFDENEGAEGEEQPADY) are compositionally biased toward acidic residues.

It belongs to the tubulin family. In terms of assembly, dimer of alpha and beta chains. A typical microtubule is a hollow water-filled tube with an outer diameter of 25 nm and an inner diameter of 15 nM. Alpha-beta heterodimers associate head-to-tail to form protofilaments running lengthwise along the microtubule wall with the beta-tubulin subunit facing the microtubule plus end conferring a structural polarity. Microtubules usually have 13 protofilaments but different protofilament numbers can be found in some organisms and specialized cells. The cofactor is Mg(2+).

It localises to the cytoplasm. The protein resides in the cytoskeleton. In terms of biological role, tubulin is the major constituent of microtubules, a cylinder consisting of laterally associated linear protofilaments composed of alpha- and beta-tubulin heterodimers. Microtubules grow by the addition of GTP-tubulin dimers to the microtubule end, where a stabilizing cap forms. Below the cap, tubulin dimers are in GDP-bound state, owing to GTPase activity of alpha-tubulin. This chain is Tubulin beta chain, found in Naegleria pringsheimi (Amoeba).